A 96-amino-acid polypeptide reads, in one-letter code: MSATKKYEMMILLTEEFNDSELKTWAFNYAKALRKLSASEISVISRGKRDLSYYINNQKKGNFIQINFSSMPKYVDNFSKNLKFDSNVLRFLILNK.

Belongs to the bacterial ribosomal protein bS6 family.

The protein localises to the plastid. It is found in the chloroplast. In terms of biological role, binds together with bS18 to 16S ribosomal RNA. The sequence is that of Small ribosomal subunit protein bS6c (rps6) from Trieres chinensis (Marine centric diatom).